A 200-amino-acid chain; its full sequence is NADH-quinone oxidoreductase subunit C (200 aa).

It belongs to the complex I 30 kDa subunit family. NDH-1 is composed of 14 different subunits. Subunits NuoB, C, D, E, F, and G constitute the peripheral sector of the complex.

It localises to the cell inner membrane. It catalyses the reaction a quinone + NADH + 5 H(+)(in) = a quinol + NAD(+) + 4 H(+)(out). In terms of biological role, NDH-1 shuttles electrons from NADH, via FMN and iron-sulfur (Fe-S) centers, to quinones in the respiratory chain. The immediate electron acceptor for the enzyme in this species is believed to be ubiquinone. Couples the redox reaction to proton translocation (for every two electrons transferred, four hydrogen ions are translocated across the cytoplasmic membrane), and thus conserves the redox energy in a proton gradient. This Rhizobium leguminosarum bv. trifolii (strain WSM2304) protein is NADH-quinone oxidoreductase subunit C.